Here is a 141-residue protein sequence, read N- to C-terminus: Phosphoribosyl-AMP cyclohydrolase (141 aa).

Aspartate 91 serves as a coordination point for Mg(2+). Residue cysteine 92 participates in Zn(2+) binding. The Mg(2+) site is built by aspartate 93 and aspartate 95. Zn(2+)-binding residues include cysteine 110 and cysteine 117.

Belongs to the PRA-CH family. In terms of assembly, homodimer. Requires Mg(2+) as cofactor. It depends on Zn(2+) as a cofactor.

It localises to the cytoplasm. It carries out the reaction 1-(5-phospho-beta-D-ribosyl)-5'-AMP + H2O = 1-(5-phospho-beta-D-ribosyl)-5-[(5-phospho-beta-D-ribosylamino)methylideneamino]imidazole-4-carboxamide. Its pathway is amino-acid biosynthesis; L-histidine biosynthesis; L-histidine from 5-phospho-alpha-D-ribose 1-diphosphate: step 3/9. Its function is as follows. Catalyzes the hydrolysis of the adenine ring of phosphoribosyl-AMP. The polypeptide is Phosphoribosyl-AMP cyclohydrolase (Brucella anthropi (strain ATCC 49188 / DSM 6882 / CCUG 24695 / JCM 21032 / LMG 3331 / NBRC 15819 / NCTC 12168 / Alc 37) (Ochrobactrum anthropi)).